The primary structure comprises 207 residues: Uracil phosphoribosyltransferase (207 aa).

5-phospho-alpha-D-ribose 1-diphosphate contacts are provided by residues arginine 77, arginine 102, and 129–137 (DPMLATGGS). Uracil contacts are provided by residues isoleucine 192 and 197–199 (GDA). Aspartate 198 contributes to the 5-phospho-alpha-D-ribose 1-diphosphate binding site.

This sequence belongs to the UPRTase family. It depends on Mg(2+) as a cofactor.

It catalyses the reaction UMP + diphosphate = 5-phospho-alpha-D-ribose 1-diphosphate + uracil. It functions in the pathway pyrimidine metabolism; UMP biosynthesis via salvage pathway; UMP from uracil: step 1/1. Allosterically activated by GTP. Catalyzes the conversion of uracil and 5-phospho-alpha-D-ribose 1-diphosphate (PRPP) to UMP and diphosphate. The chain is Uracil phosphoribosyltransferase from Dictyoglomus thermophilum (strain ATCC 35947 / DSM 3960 / H-6-12).